Reading from the N-terminus, the 360-residue chain is Variable large protein 14 (360 aa).

A signal peptide spans 1–18; the sequence is MRKRISAIIMTLFMVLAS. Residue Cys19 is the site of N-palmitoyl cysteine attachment. Cys19 is lipidated: S-diacylglycerol cysteine.

The protein belongs to the variable large protein (Vlp) family. Beta subfamily.

The protein resides in the cell outer membrane. The Vlp and Vsp proteins are antigenically distinct proteins, only one vlp or vsp gene is transcriptionally active at any one time. Switching between these genes is a mechanism of host immune response evasion. This chain is Variable large protein 14, found in Borrelia hermsii.